Consider the following 121-residue polypeptide: Heme-degrading monooxygenase (121 aa).

An ABM domain is found at 2–101 (IIVTNTIKVE…EQREDRKGIV (100 aa)). N6 lines the Fe cation pocket. The disordered stretch occupies residues 76 to 98 (KSDSFKKAHGRTKDTREQREDRK). Residues 78–98 (DSFKKAHGRTKDTREQREDRK) show a composition bias toward basic and acidic residues. H84 lines the heme pocket.

The protein belongs to the antibiotic biosynthesis monooxygenase family. Heme-degrading monooxygenase IsdG subfamily. Homodimer.

It localises to the cytoplasm. It carries out the reaction heme b + 3 reduced [NADPH--hemoprotein reductase] + 3 O2 = biliverdin IXalpha + CO + Fe(2+) + 3 oxidized [NADPH--hemoprotein reductase] + 3 H2O + H(+). Its function is as follows. Allows bacterial pathogens to use the host heme as an iron source. Catalyzes the oxidative degradation of the heme macrocyclic porphyrin ring to the biliverdin in the presence of a suitable electron donor such as ascorbate or NADPH--cytochrome P450 reductase, with subsequent release of free iron. The chain is Heme-degrading monooxygenase from Listeria innocua serovar 6a (strain ATCC BAA-680 / CLIP 11262).